Consider the following 125-residue polypeptide: Small ribosomal subunit protein eS8 (125 aa).

Residues 1–34 (MQWQGRSVRKSTGGRYSPSRGKRRREIGSAPAET) form a disordered region.

Belongs to the eukaryotic ribosomal protein eS8 family. As to quaternary structure, part of the 30S ribosomal subunit.

The chain is Small ribosomal subunit protein eS8 from Methanospirillum hungatei JF-1 (strain ATCC 27890 / DSM 864 / NBRC 100397 / JF-1).